The chain runs to 412 residues: Gamma-glutamyl phosphate reductase (412 aa).

Belongs to the gamma-glutamyl phosphate reductase family.

Its subcellular location is the cytoplasm. It catalyses the reaction L-glutamate 5-semialdehyde + phosphate + NADP(+) = L-glutamyl 5-phosphate + NADPH + H(+). The protein operates within amino-acid biosynthesis; L-proline biosynthesis; L-glutamate 5-semialdehyde from L-glutamate: step 2/2. In terms of biological role, catalyzes the NADPH-dependent reduction of L-glutamate 5-phosphate into L-glutamate 5-semialdehyde and phosphate. The product spontaneously undergoes cyclization to form 1-pyrroline-5-carboxylate. This is Gamma-glutamyl phosphate reductase from Bartonella bacilliformis (strain ATCC 35685 / KC583 / Herrer 020/F12,63).